Consider the following 857-residue polypeptide: Autoinducer 2 sensor kinase/phosphatase LuxQ (857 aa).

Helical transmembrane passes span 20-40 and 283-303; these read IIFL…YYFS and LGLA…RSWI. Positions 490–712 constitute a Histidine kinase domain; that stretch reads KMSHEIRTPL…TFYLSIPVEK (223 aa). His-493 carries the phosphohistidine; by autocatalysis modification. One can recognise a Response regulatory domain in the interval 735–850; that stretch reads KVLLVEDNHT…ELHDELLHFK (116 aa). Asp-784 bears the 4-aspartylphosphate mark.

As to quaternary structure, binds the complex formed by the autoinducer and LuxP.

The protein localises to the cell inner membrane. It catalyses the reaction ATP + protein L-histidine = ADP + protein N-phospho-L-histidine.. In terms of biological role, at low cell density, in absence of autoinducer has a kinase activity, and autophosphorylates on a histidine residue. The phosphoryl group is then transferred to an aspartate residue in the response regulator domain. The phosphoryl group is transferred to LuxU, and ultimately to LuxO. At high cell density, in the presence of autoinducer, the kinase activity is inactivated, and the response regulator domain has a phosphatase activity. In Vibrio vulnificus (strain CMCP6), this protein is Autoinducer 2 sensor kinase/phosphatase LuxQ (luxQ).